The following is a 337-amino-acid chain: Putative transcription activator protein HfaB (337 aa).

Over residues 303 to 313 the composition is skewed to polar residues; it reads AYNNLGTNNAQ. The tract at residues 303 to 337 is disordered; it reads AYNNLGTNNAQTRDDPSRWNARRDPDIRDAKRGRY. A compositionally biased stretch (basic and acidic residues) spans 314-337; it reads TRDDPSRWNARRDPDIRDAKRGRY.

Required for the attachment of the holdfast to the cell. May be involved in the positive regulation of hfaC. This is Putative transcription activator protein HfaB (hfaB) from Caulobacter vibrioides (strain ATCC 19089 / CIP 103742 / CB 15) (Caulobacter crescentus).